The chain runs to 367 residues: Coiled-coil domain-containing protein 34 (367 aa).

S55 carries the post-translational modification Phosphoserine. 3 disordered regions span residues 77 to 105 (FPFG…KVES), 191 to 228 (QKKN…KAKE), and 310 to 349 (YNPI…SSLA). A compositionally biased stretch (acidic residues) spans 82–97 (DDSEGEDEEALDEDAR). Coiled-coil stretches lie at residues 87–108 (EDEE…SLEG) and 153–280 (RLQQ…AKNK). Basic and acidic residues predominate over residues 197–228 (ERKEREQKINKEMEEKEAKKREKEHLQEKAKE). Positions 339–349 (ASQPLPSSSLA) are enriched in low complexity.

In terms of tissue distribution, expressed in testis and sperm.

It localises to the cell projection. Its subcellular location is the cilium. The protein resides in the flagellum. Involved in spermatogenesis. Has a probable role in anterograde intraflagellar transport which is essential for the formation of sperm flagella. This chain is Coiled-coil domain-containing protein 34 (Ccdc34), found in Mus musculus (Mouse).